The chain runs to 147 residues: Proteinase inhibitor type-2 T (147 aa).

The signal sequence occupies residues 1-25 (MAVHKEVSFVAYLLIVLGMFLYVDA). A run of 2 repeats spans residues 25–82 (ALGC…PKNP) and 83–142 (KACP…EPKP). 8 cysteine pairs are disulfide-bonded: C28–C116, C32–C112, C40–C122, C52–C89, C55–C73, C56–C85, C62–C98, and C115–C133.

This sequence belongs to the protease inhibitor I20 (potato type II proteinase inhibitor) family.

Its function is as follows. Inhibitor of trypsin and chymotrypsin. The protein is Proteinase inhibitor type-2 T (PIN2T) of Solanum tuberosum (Potato).